Consider the following 127-residue polypeptide: Small ribosomal subunit protein uS13 (127 aa).

The disordered stretch occupies residues 90–127; that stretch reads KRHREGLPVNGQRTRTNARTRKGKRKTVAGRSQSTQKK. Basic residues predominate over residues 105–117; it reads TNARTRKGKRKTV.

Belongs to the universal ribosomal protein uS13 family. As to quaternary structure, part of the 30S ribosomal subunit. Forms a loose heterodimer with protein S19. Forms two bridges to the 50S subunit in the 70S ribosome.

In terms of biological role, located at the top of the head of the 30S subunit, it contacts several helices of the 16S rRNA. In the 70S ribosome it contacts the 23S rRNA (bridge B1a) and protein L5 of the 50S subunit (bridge B1b), connecting the 2 subunits; these bridges are implicated in subunit movement. Contacts the tRNAs in the A and P-sites. This chain is Small ribosomal subunit protein uS13, found in Salinibacter ruber (strain DSM 13855 / M31).